The primary structure comprises 393 residues: tRNA (guanine-N(7)-)-methyltransferase (393 aa).

Positions 124, 149, and 176 each coordinate S-adenosyl-L-methionine. Asp-232 is a binding site for substrate.

Belongs to the class I-like SAM-binding methyltransferase superfamily. TrmB family.

It catalyses the reaction guanosine(46) in tRNA + S-adenosyl-L-methionine = N(7)-methylguanosine(46) in tRNA + S-adenosyl-L-homocysteine. The protein operates within tRNA modification; N(7)-methylguanine-tRNA biosynthesis. Its function is as follows. Catalyzes the formation of N(7)-methylguanine at position 46 (m7G46) in tRNA. The protein is tRNA (guanine-N(7)-)-methyltransferase of Helicobacter pylori (strain HPAG1).